Here is a 92-residue protein sequence, read N- to C-terminus: Small ribosomal subunit protein uS19 (92 aa).

Belongs to the universal ribosomal protein uS19 family.

Its function is as follows. Protein S19 forms a complex with S13 that binds strongly to the 16S ribosomal RNA. The chain is Small ribosomal subunit protein uS19 from Wigglesworthia glossinidia brevipalpis.